The following is a 239-amino-acid chain: Sugar fermentation stimulation protein homolog (239 aa).

Belongs to the SfsA family.

The polypeptide is Sugar fermentation stimulation protein homolog (Synechococcus sp. (strain JA-3-3Ab) (Cyanobacteria bacterium Yellowstone A-Prime)).